A 132-amino-acid chain; its full sequence is Antileukoproteinase (132 aa).

Residues 1 to 25 (MKSSGLFPFLVLLALGTLAPWAVEG) form the signal peptide. 2 WAP domains span residues 28–76 (KSFK…LDPV) and 82–130 (TRRK…VSPV). Intrachain disulfides connect Cys-35/Cys-64, Cys-43/Cys-68, Cys-51/Cys-63, Cys-57/Cys-72, Cys-89/Cys-118, Cys-96/Cys-122, Cys-105/Cys-117, and Cys-111/Cys-126. The interval 84-132 (RKPGKCPVTYGQCLMLNPPNFCEMDGQCKRDLKCCMGMCGKSCVSPVKA) is elastase inhibitory domain.

In terms of assembly, interacts with GRN; interaction protects progranulin from proteolysis. As to expression, detected in blood plasma. Detected in bone marrow myeloid cells. Detected in airway sputum. Detected in parotid gland secretions. Detected in seminal plasma (at protein level). Detected in uterus cervix.

It localises to the secreted. Functionally, acid-stable proteinase inhibitor with strong affinities for trypsin, chymotrypsin, elastase, and cathepsin G. Modulates the inflammatory and immune responses after bacterial infection, and after infection by the intracellular parasite L.major. Down-regulates responses to bacterial lipopolysaccharide (LPS). Plays a role in regulating the activation of NF-kappa-B and inflammatory responses. Has antimicrobial activity against mycobacteria, but not against salmonella. Contributes to normal resistance against infection by M.tuberculosis. Required for normal resistance to infection by L.major. Required for normal wound healing, probably by preventing tissue damage by limiting protease activity. Together with ELANE, required for normal differentiation and proliferation of bone marrow myeloid cells. The sequence is that of Antileukoproteinase (SLPI) from Homo sapiens (Human).